The following is a 1159-amino-acid chain: ATP-dependent helicase/deoxyribonuclease subunit B (1159 aa).

This sequence belongs to the helicase family. AddB/RexB type 2 subfamily. In terms of assembly, heterodimer of AddA and RexB. Requires Mg(2+) as cofactor.

Functionally, the heterodimer acts as both an ATP-dependent DNA helicase and an ATP-dependent, dual-direction single-stranded exonuclease. Recognizes the chi site generating a DNA molecule suitable for the initiation of homologous recombination. This subunit has 5' -&gt; 3' nuclease activity but not helicase activity. This Leuconostoc mesenteroides subsp. mesenteroides (strain ATCC 8293 / DSM 20343 / BCRC 11652 / CCM 1803 / JCM 6124 / NCDO 523 / NBRC 100496 / NCIMB 8023 / NCTC 12954 / NRRL B-1118 / 37Y) protein is ATP-dependent helicase/deoxyribonuclease subunit B.